A 373-amino-acid polypeptide reads, in one-letter code: Peptide chain release factor subunit 1 (373 aa).

Belongs to the eukaryotic release factor 1 family. Heterodimer of two subunits, one of which binds GTP.

The protein resides in the cytoplasm. Functionally, directs the termination of nascent peptide synthesis (translation) in response to the termination codons UAA, UAG and UGA. The sequence is that of Peptide chain release factor subunit 1 (prf1) from Aeropyrum pernix (strain ATCC 700893 / DSM 11879 / JCM 9820 / NBRC 100138 / K1).